Reading from the N-terminus, the 400-residue chain is CCA-adding enzyme (400 aa).

Residues Gly-32 and Arg-35 each coordinate ATP. Gly-32 and Arg-35 together coordinate CTP. Mg(2+)-binding residues include Asp-45 and Asp-47. ATP-binding residues include Arg-116, Asp-159, Arg-162, Arg-165, and Arg-168. Residues Arg-116, Asp-159, Arg-162, Arg-165, and Arg-168 each contribute to the CTP site.

Belongs to the tRNA nucleotidyltransferase/poly(A) polymerase family. Bacterial CCA-adding enzyme type 3 subfamily. Homodimer. Requires Mg(2+) as cofactor.

The catalysed reaction is a tRNA precursor + 2 CTP + ATP = a tRNA with a 3' CCA end + 3 diphosphate. The enzyme catalyses a tRNA with a 3' CCA end + 2 CTP + ATP = a tRNA with a 3' CCACCA end + 3 diphosphate. Its function is as follows. Catalyzes the addition and repair of the essential 3'-terminal CCA sequence in tRNAs without using a nucleic acid template. Adds these three nucleotides in the order of C, C, and A to the tRNA nucleotide-73, using CTP and ATP as substrates and producing inorganic pyrophosphate. tRNA 3'-terminal CCA addition is required both for tRNA processing and repair. Also involved in tRNA surveillance by mediating tandem CCA addition to generate a CCACCA at the 3' terminus of unstable tRNAs. While stable tRNAs receive only 3'-terminal CCA, unstable tRNAs are marked with CCACCA and rapidly degraded. This Limosilactobacillus fermentum (strain NBRC 3956 / LMG 18251) (Lactobacillus fermentum) protein is CCA-adding enzyme.